The chain runs to 484 residues: Ribosomal protein uS12 methylthiotransferase RimO (484 aa).

Residues 8-119 enclose the MTTase N-terminal domain; the sequence is RRVAMVTLGC…LAERLDDVLA (112 aa). Positions 17, 53, 82, 184, 188, and 191 each coordinate [4Fe-4S] cluster. A Radical SAM core domain is found at 170 to 401; that stretch reads LDDSPLAALK…ALADELVAQR (232 aa). A TRAM domain is found at 403–469; the sequence is EDRVGTEVRV…GVDLVVRPVG (67 aa).

This sequence belongs to the methylthiotransferase family. RimO subfamily. [4Fe-4S] cluster is required as a cofactor.

The protein localises to the cytoplasm. The enzyme catalyses L-aspartate(89)-[ribosomal protein uS12]-hydrogen + (sulfur carrier)-SH + AH2 + 2 S-adenosyl-L-methionine = 3-methylsulfanyl-L-aspartate(89)-[ribosomal protein uS12]-hydrogen + (sulfur carrier)-H + 5'-deoxyadenosine + L-methionine + A + S-adenosyl-L-homocysteine + 2 H(+). Functionally, catalyzes the methylthiolation of an aspartic acid residue of ribosomal protein uS12. The chain is Ribosomal protein uS12 methylthiotransferase RimO from Saccharopolyspora erythraea (strain ATCC 11635 / DSM 40517 / JCM 4748 / NBRC 13426 / NCIMB 8594 / NRRL 2338).